A 230-amino-acid chain; its full sequence is Urease accessory protein UreF (230 aa).

It belongs to the UreF family. As to quaternary structure, ureD, UreF and UreG form a complex that acts as a GTP-hydrolysis-dependent molecular chaperone, activating the urease apoprotein by helping to assemble the nickel containing metallocenter of UreC. The UreE protein probably delivers the nickel.

Its subcellular location is the cytoplasm. Its function is as follows. Required for maturation of urease via the functional incorporation of the urease nickel metallocenter. This chain is Urease accessory protein UreF, found in Chromohalobacter salexigens (strain ATCC BAA-138 / DSM 3043 / CIP 106854 / NCIMB 13768 / 1H11).